The primary structure comprises 337 residues: RAD51-associated protein 1 (337 aa).

2 disordered regions span residues methionine 1–lysine 69 and leucine 88–arginine 337. A phosphoserine mark is found at serine 19 and serine 23. Polar residues predominate over residues isoleucine 28–lysine 38. Positions threonine 32–lysine 50 are interaction with DNA. The segment covering leucine 44–lysine 69 has biased composition (basic and acidic residues). Phosphoserine is present on residues serine 103 and serine 107. Positions glutamate 105–asparagine 118 are enriched in basic and acidic residues. Positions leucine 138–glutamate 143 match the SIM motif motif. Over residues serine 190 to aspartate 205 the composition is skewed to acidic residues. The tract at residues glycine 225–tryptophan 286 is interaction with DNA. Lysine 251 participates in a covalent cross-link: Glycyl lysine isopeptide (Lys-Gly) (interchain with G-Cter in SUMO; alternate). A Glycyl lysine isopeptide (Lys-Gly) (interchain with G-Cter in ubiquitin; alternate) cross-link involves residue lysine 251. Residues tryptophan 286–proline 289 carry the WVPP motif motif. Residues alanine 290 to glycine 304 show a composition bias toward low complexity. Positions arginine 295–serine 334 are interaction with RAD51. Serine 309 bears the Phosphoserine mark.

As to quaternary structure, monomer; elongated monodisperse monomer. Interacts (via C-terminal region) with RAD51; the interaction is direct. Interacts (via SIM motif) with WDR48/UAF1; WDR48/UAF1 and RAD51AP1 cooperate together to stimulate RAD51-mediated homologous recombination (HR). Interacts (via WVPP motif) with DMC1; the interaction is direct. Interacts with PALB2. Interacts with RAD52. Sumoylation with SUMO2/3 by NSMCE2/MMS21 promotes stabilization, possibly by preventing ubiquitination. Most abundantly expressed in testis. Also expressed in spleen, thymus and bone marrow. Not detected in heart, kidney or liver.

The protein localises to the chromosome. It localises to the nucleus. Its subcellular location is the telomere. In terms of biological role, structure-specific DNA-binding protein involved in DNA repair by promoting RAD51-mediated homologous recombination. Acts by stimulating D-Loop formation by RAD51: specifically enhances joint molecule formation through its structure-specific DNA interaction and its interaction with RAD51. Binds single-stranded DNA (ssDNA), double-stranded DNA (dsDNA) and secondary DNA structures, such as D-loop structures: has a strong preference for branched-DNA structures that are obligatory intermediates during joint molecule formation. Cooperates with WDR48/UAF1 to stimulate RAD51-mediated homologous recombination: both WDR48/UAF1 and RAD51AP1 have coordinated role in DNA-binding during homologous recombination and DNA repair. WDR48/UAF1 and RAD51AP1 also have a coordinated role in DNA-binding to promote USP1-mediated deubiquitination of FANCD2. Also involved in meiosis by promoting DMC1-mediated homologous meiotic recombination. This Mus musculus (Mouse) protein is RAD51-associated protein 1.